A 215-amino-acid polypeptide reads, in one-letter code: LexA repressor (215 aa).

The segment at residues 29–49 (VREICSAVGFKSTSTVHSYLQ) is a DNA-binding region (H-T-H motif). Active-site for autocatalytic cleavage activity residues include Ser138 and Lys175.

It belongs to the peptidase S24 family. In terms of assembly, homodimer.

It carries out the reaction Hydrolysis of Ala-|-Gly bond in repressor LexA.. Functionally, represses a number of genes involved in the response to DNA damage (SOS response), including recA and lexA. In the presence of single-stranded DNA, RecA interacts with LexA causing an autocatalytic cleavage which disrupts the DNA-binding part of LexA, leading to derepression of the SOS regulon and eventually DNA repair. The protein is LexA repressor of Ruminiclostridium cellulolyticum (strain ATCC 35319 / DSM 5812 / JCM 6584 / H10) (Clostridium cellulolyticum).